Consider the following 348-residue polypeptide: Rhodopsin (348 aa).

Met1 is subject to N-acetylmethionine. Topologically, residues Met1–Gln36 are extracellular. Asn2 and Asn15 each carry an N-linked (GlcNAc...) asparagine glycan. Residues Phe37–Val61 traverse the membrane as a helical segment. Topologically, residues Thr62–Asn73 are cytoplasmic. The chain crosses the membrane as a helical span at residues Tyr74–Tyr96. At Thr97 to Cys110 the chain is on the extracellular side. Cys110 and Cys187 form a disulfide bridge. Residues Asn111–Ile133 form a helical membrane-spanning segment. Positions Glu134–Tyr136 match the 'Ionic lock' involved in activated form stabilization motif. The Cytoplasmic portion of the chain corresponds to Glu134–His152. The chain crosses the membrane as a helical span at residues Ala153–Ala173. The Extracellular portion of the chain corresponds to Gly174–Ser202. Glu201 contacts Zn(2+). A helical membrane pass occupies residues Phe203–Gly224. At Gln225–Arg252 the chain is on the cytoplasmic side. A helical membrane pass occupies residues Met253 to Tyr274. At Ile275–Ile286 the chain is on the extracellular side. Position 279 (Gln279) interacts with Zn(2+). Residues Phe287–Met308 traverse the membrane as a helical segment. N6-(retinylidene)lysine is present on Lys296. Residues Met309–Ala348 lie on the Cytoplasmic side of the membrane. S-palmitoyl cysteine attachment occurs at residues Cys322 and Cys323. The interval Asp330–Ala348 is interaction with SAG. Residues Ser334 and Ser338 each carry the phosphoserine modification. 2 positions are modified to phosphothreonine: Thr340 and Thr342. Ser343 is modified (phosphoserine).

This sequence belongs to the G-protein coupled receptor 1 family. Opsin subfamily. In terms of assembly, homodimer. May form a complex composed of RHO, GRK1 and RCVRN in a Ca(2+)-dependent manner; RCVRN prevents the interaction between GRK1 and RHO. Interacts with GRK1. Interacts (phosphorylated form) with SAG. Interacts with GNAT1. Interacts with GNAT3. SAG and G-proteins compete for a common binding site. Interacts with PRCD; the interaction promotes PRCD stability. Forms a complex with ASAP1 and ARF4. Forms a complex with ASAP1, RAB11A, Rabin8/RAB3IP, ARF4 and RAB11FIP3; the complex regulates Golgi-to-cilia rhodopsin/RHO transport in photoreceptors. Post-translationally, phosphorylated on some or all of the serine and threonine residues present in the C-terminal region. In terms of processing, contains one covalently linked retinal chromophore. Upon light absorption, the covalently bound 11-cis-retinal is converted to all-trans-retinal. After hydrolysis of the Schiff base and release of the covalently bound all-trans-retinal, active rhodopsin is regenerated by binding of a fresh molecule of 11-cis-retinal.

The protein localises to the membrane. It localises to the cell projection. The protein resides in the cilium. It is found in the photoreceptor outer segment. Photoreceptor required for image-forming vision at low light intensity. Required for photoreceptor cell viability after birth. Light-induced isomerization of 11-cis to all-trans retinal triggers a conformational change that activates signaling via G-proteins. Subsequent receptor phosphorylation mediates displacement of the bound G-protein alpha subunit by the arrestin SAG and terminates signaling. The polypeptide is Rhodopsin (RHO) (Canis lupus familiaris (Dog)).